Here is a 101-residue protein sequence, read N- to C-terminus: NADH-quinone oxidoreductase subunit K (101 aa).

Helical transmembrane passes span 4 to 24 (LSHY…GIFL), 30 to 50 (IVLL…FIAF), and 61 to 81 (VFVF…LAIL).

This sequence belongs to the complex I subunit 4L family. As to quaternary structure, NDH-1 is composed of 14 different subunits. Subunits NuoA, H, J, K, L, M, N constitute the membrane sector of the complex.

The protein resides in the cell inner membrane. The enzyme catalyses a quinone + NADH + 5 H(+)(in) = a quinol + NAD(+) + 4 H(+)(out). Functionally, NDH-1 shuttles electrons from NADH, via FMN and iron-sulfur (Fe-S) centers, to quinones in the respiratory chain. The immediate electron acceptor for the enzyme in this species is believed to be ubiquinone. Couples the redox reaction to proton translocation (for every two electrons transferred, four hydrogen ions are translocated across the cytoplasmic membrane), and thus conserves the redox energy in a proton gradient. This chain is NADH-quinone oxidoreductase subunit K, found in Azoarcus sp. (strain BH72).